We begin with the raw amino-acid sequence, 374 residues long: 4-hydroxy-3-methylbut-2-en-1-yl diphosphate synthase (flavodoxin) (374 aa).

The [4Fe-4S] cluster site is built by C270, C273, C305, and E312.

The protein belongs to the IspG family. [4Fe-4S] cluster is required as a cofactor.

The enzyme catalyses (2E)-4-hydroxy-3-methylbut-2-enyl diphosphate + oxidized [flavodoxin] + H2O + 2 H(+) = 2-C-methyl-D-erythritol 2,4-cyclic diphosphate + reduced [flavodoxin]. Its pathway is isoprenoid biosynthesis; isopentenyl diphosphate biosynthesis via DXP pathway; isopentenyl diphosphate from 1-deoxy-D-xylulose 5-phosphate: step 5/6. Its function is as follows. Converts 2C-methyl-D-erythritol 2,4-cyclodiphosphate (ME-2,4cPP) into 1-hydroxy-2-methyl-2-(E)-butenyl 4-diphosphate. This is 4-hydroxy-3-methylbut-2-en-1-yl diphosphate synthase (flavodoxin) from Vibrio cholerae serotype O1 (strain ATCC 39315 / El Tor Inaba N16961).